The primary structure comprises 1432 residues: Gag-Pol polyprotein (1432 aa).

2 consecutive CCHC-type zinc fingers follow at residues 368 to 385 (QRCYGCGKPGHIRRDCKN) and 386 to 403 (QKCFKCGKPGHLQRNCKS). Positions 452 to 525 (VRALIDTGAD…TPVNLLGRSV (74 aa)) constitute a Peptidase A2 domain. Asp457 acts as the For protease activity; shared with dimeric partner in catalysis. The 188-residue stretch at 579–766 (DGKISRTPWD…EQVQWLGYEL (188 aa)) folds into the Reverse transcriptase domain. Asp645, Asp720, and Asp721 together coordinate Mg(2+). Positions 815 to 843 (KGKTDLKDKIKLTEEAIQCLETVNKRLKD) form a coiled coil. Residues 959–1079 (IERYPTYYTD…VDQEVQKALQ (121 aa)) form the RNase H type-1 domain. The Mg(2+) site is built by Asp968, Glu999, Asp1019, and Asp1071. Residues 1157 to 1198 (EAIPQAIEEHEKWHTTAEILAREFQLPRRVAREIVHRCQACK) form an Integrase-type zinc finger. Residues His1166, His1170, Cys1194, and Cys1197 each contribute to the Zn(2+) site. The region spanning 1206-1358 (RGTNPRERFL…TPYEIYLESE (153 aa)) is the Integrase catalytic domain. Asp1219 and Asp1271 together coordinate Mg(2+). Residues 1376–1422 (KWAYVRDKRKVWKGPYKVLWDGEGAAVVEENAMPTLYPHRHMRFIPP) constitute a DNA-binding region (integrase-type).

Post-translationally, specific enzymatic cleavages by the viral protease yield mature proteins. The protease is released by autocatalytic cleavage. The polyprotein is cleaved during and after budding, this process is termed maturation.

The protein resides in the virion. The catalysed reaction is DNA(n) + a 2'-deoxyribonucleoside 5'-triphosphate = DNA(n+1) + diphosphate. It catalyses the reaction Endohydrolysis of RNA in RNA/DNA hybrids. Three different cleavage modes: 1. sequence-specific internal cleavage of RNA. Human immunodeficiency virus type 1 and Moloney murine leukemia virus enzymes prefer to cleave the RNA strand one nucleotide away from the RNA-DNA junction. 2. RNA 5'-end directed cleavage 13-19 nucleotides from the RNA end. 3. DNA 3'-end directed cleavage 15-20 nucleotides away from the primer terminus.. It carries out the reaction 3'-end directed exonucleolytic cleavage of viral RNA-DNA hybrid.. Functionally, matrix protein p16 forms the outer shell of the core of the virus, lining the inner surface of the viral membrane. In terms of biological role, capsid protein p26 forms the conical core of the virus that encapsulates the genomic RNA-nucleocapsid complex. Its function is as follows. The aspartyl protease mediates proteolytic cleavages of Gag and Gag-Pol polyproteins during or shortly after the release of the virion from the plasma membrane. Cleavages take place as an ordered, step-wise cascade to yield mature proteins. This process is called maturation. Displays maximal activity during the budding process just prior to particle release from the cell. Reverse transcriptase/ribonuclease H (RT) is a multifunctional enzyme that converts the viral RNA genome into dsDNA in the cytoplasm, shortly after virus entry into the cell. This enzyme displays a DNA polymerase activity that can copy either DNA or RNA templates, and a ribonuclease H (RNase H) activity that cleaves the RNA strand of RNA-DNA heteroduplexes in a partially processive 3' to 5' endonucleasic mode. Conversion of viral genomic RNA into dsDNA requires many steps. A tRNA binds to the primer-binding site (PBS) situated at the 5'-end of the viral RNA. RT uses the 3' end of the tRNA primer to perform a short round of RNA-dependent minus-strand DNA synthesis. The reading proceeds through the U5 region and ends after the repeated (R) region which is present at both ends of viral RNA. The portion of the RNA-DNA heteroduplex is digested by the RNase H, resulting in a ssDNA product attached to the tRNA primer. This ssDNA/tRNA hybridizes with the identical R region situated at the 3' end of viral RNA. This template exchange, known as minus-strand DNA strong stop transfer, can be either intra- or intermolecular. RT uses the 3' end of this newly synthesized short ssDNA to perform the RNA-dependent minus-strand DNA synthesis of the whole template. RNase H digests the RNA template except for a polypurine tract (PPT) situated at the 5'-end of the genome. It is not clear if both polymerase and RNase H activities are simultaneous. RNase H probably can proceed both in a polymerase-dependent (RNA cut into small fragments by the same RT performing DNA synthesis) and a polymerase-independent mode (cleavage of remaining RNA fragments by free RTs). Secondly, RT performs DNA-directed plus-strand DNA synthesis using the PPT that has not been removed by RNase H as primer. PPT and tRNA primers are then removed by RNase H. The 3' and 5' ssDNA PBS regions hybridize to form a circular dsDNA intermediate. Strand displacement synthesis by RT to the PBS and PPT ends produces a blunt ended, linear dsDNA copy of the viral genome that includes long terminal repeats (LTRs) at both ends. Functionally, integrase catalyzes viral DNA integration into the host chromosome, by performing a series of DNA cutting and joining reactions. This enzyme activity takes place after virion entry into a cell and reverse transcription of the RNA genome in dsDNA. The polypeptide is Gag-Pol polyprotein (gag-pol) (Jembrana disease virus (JDV)).